A 369-amino-acid polypeptide reads, in one-letter code: Anhydro-N-acetylmuramic acid kinase (369 aa).

Residue 12–19 participates in ATP binding; the sequence is GTSMDGVD.

The protein belongs to the anhydro-N-acetylmuramic acid kinase family.

It carries out the reaction 1,6-anhydro-N-acetyl-beta-muramate + ATP + H2O = N-acetyl-D-muramate 6-phosphate + ADP + H(+). It functions in the pathway amino-sugar metabolism; 1,6-anhydro-N-acetylmuramate degradation. The protein operates within cell wall biogenesis; peptidoglycan recycling. Functionally, catalyzes the specific phosphorylation of 1,6-anhydro-N-acetylmuramic acid (anhMurNAc) with the simultaneous cleavage of the 1,6-anhydro ring, generating MurNAc-6-P. Is required for the utilization of anhMurNAc either imported from the medium or derived from its own cell wall murein, and thus plays a role in cell wall recycling. This chain is Anhydro-N-acetylmuramic acid kinase, found in Shewanella baltica (strain OS185).